Reading from the N-terminus, the 60-residue chain is Large ribosomal subunit protein bL32 (60 aa).

A disordered region spans residues 1 to 47 (MAVQQNRKTRSKRGMRRSHDALTSSTLSTDPTTGEKHRRHHVTADGF). The segment covering 7-16 (RKTRSKRGMR) has biased composition (basic residues).

The protein belongs to the bacterial ribosomal protein bL32 family.

The polypeptide is Large ribosomal subunit protein bL32 (Teredinibacter turnerae (strain ATCC 39867 / T7901)).